A 1164-amino-acid polypeptide reads, in one-letter code: Toxin subunit YenA1 (1164 aa).

Positions 106 to 131 (RLEKSNSPLVPQTSSSTDASSESQTN) are disordered. The span at 118-130 (TSSSTDASSESQT) shows a compositional bias: low complexity.

As to quaternary structure, semipurified toxin complex consists of at least YenA1, YenA2, YenB, YenC1, YenC2, Chi1 and Chi2. The Yen-TC:K9 subcomplex is about 26 nm tall and 22 nm in diameter with 5-fold symmetry and 5 copies of YenA1, YenA2, Chi1 and Chi2; the chitinase subunits may be solvent accessible on the exterior the complex. The Yen-TC:K9 subcomplex has no insecticidal activity. The native complex with additional YenB, YenC1 and YenC2 subunits is 16 nm taller and is insecticidal; the toxicity-conferring subunits are present at about 1 copy each.

It localises to the secreted. Toxin complex is secreted when grown at 25 degrees Celsius or less; at higher temperatures the proteins are present intracellularly but not secreted. Functionally, part of an orally active toxin complex (TC) with strong insecticidal effects on larvae of the Coleoptera Costelytra zealandica, Acrossidius tasmania and Adoryphorus couloni and some Lepidoptera larvae. The TC has an endochitinase activity. This Yersinia entomophaga protein is Toxin subunit YenA1.